We begin with the raw amino-acid sequence, 176 residues long: Translation initiation factor IF-3 (176 aa).

Belongs to the IF-3 family. As to quaternary structure, monomer.

It localises to the cytoplasm. Its function is as follows. IF-3 binds to the 30S ribosomal subunit and shifts the equilibrium between 70S ribosomes and their 50S and 30S subunits in favor of the free subunits, thus enhancing the availability of 30S subunits on which protein synthesis initiation begins. In Streptococcus agalactiae serotype Ia (strain ATCC 27591 / A909 / CDC SS700), this protein is Translation initiation factor IF-3.